The chain runs to 512 residues: Ribose import ATP-binding protein RbsA (512 aa).

ABC transporter domains follow at residues 6–242 and 252–496; these read LELR…VNRE and VPAG…TGAQ. 38–45 is a binding site for ATP; it reads GENGAGKS.

It belongs to the ABC transporter superfamily. Ribose importer (TC 3.A.1.2.1) family. In terms of assembly, the complex is composed of an ATP-binding protein (RbsA), two transmembrane proteins (RbsC) and a solute-binding protein (RbsB).

Its subcellular location is the cell inner membrane. It catalyses the reaction D-ribose(out) + ATP + H2O = D-ribose(in) + ADP + phosphate + H(+). Part of the ABC transporter complex RbsABC involved in ribose import. Responsible for energy coupling to the transport system. In Pseudomonas putida (strain ATCC 47054 / DSM 6125 / CFBP 8728 / NCIMB 11950 / KT2440), this protein is Ribose import ATP-binding protein RbsA.